A 213-amino-acid chain; its full sequence is MSAKAALPLQMFGRRLVHLRSSVTSQNMSALRLYSTEKQPEEATEQKATESSPEVEKLTKELAAAKEQNAELMDKYKRSLADSENMRNRLNKQISDAKIFGIQSFCKDLLEVADTLGHATQAVPKDKLSGNADLKNLYEGLTMTRASLLQVFKRHGLEPLDPINQKFDPNQHEALFQKEDKTVEPNTVVEVTKLGYKLHERCIRPALVGVSKC.

The tract at residues 35-55 (STEKQPEEATEQKATESSPEV) is disordered. A compositionally biased stretch (basic and acidic residues) spans 38–55 (KQPEEATEQKATESSPEV).

The protein belongs to the GrpE family. In terms of assembly, probable component of the PAM complex at least composed of a mitochondrial HSP70 protein, Roe1, TIM44, blp/TIM16 and TIM14.

The protein localises to the mitochondrion matrix. Essential component of the PAM complex, a complex required for the translocation of transit peptide-containing proteins from the inner membrane into the mitochondrial matrix in an ATP-dependent manner. Seems to control the nucleotide-dependent binding of mitochondrial HSP70 to substrate proteins. In Drosophila melanogaster (Fruit fly), this protein is GrpE protein homolog, mitochondrial (Roe1).